The sequence spans 404 residues: 1-deoxy-D-xylulose 5-phosphate reductoisomerase (404 aa).

NADPH is bound by residues Thr5, Gly6, Ser7, Ile8, Gly31, Arg32, Asn33, and Asn121. Lys122 is a 1-deoxy-D-xylulose 5-phosphate binding site. Glu123 is a binding site for NADPH. Asp147 is a Mn(2+) binding site. Residues Ser148, Glu149, Ser185, and His208 each contribute to the 1-deoxy-D-xylulose 5-phosphate site. Residue Glu149 participates in Mn(2+) binding. Gly214 lines the NADPH pocket. Residues Ser221, Asn226, Lys227, and Glu230 each coordinate 1-deoxy-D-xylulose 5-phosphate. Glu230 serves as a coordination point for Mn(2+).

The protein belongs to the DXR family. Mg(2+) is required as a cofactor. Requires Mn(2+) as cofactor.

The enzyme catalyses 2-C-methyl-D-erythritol 4-phosphate + NADP(+) = 1-deoxy-D-xylulose 5-phosphate + NADPH + H(+). It participates in isoprenoid biosynthesis; isopentenyl diphosphate biosynthesis via DXP pathway; isopentenyl diphosphate from 1-deoxy-D-xylulose 5-phosphate: step 1/6. Catalyzes the NADPH-dependent rearrangement and reduction of 1-deoxy-D-xylulose-5-phosphate (DXP) to 2-C-methyl-D-erythritol 4-phosphate (MEP). This chain is 1-deoxy-D-xylulose 5-phosphate reductoisomerase, found in Prochlorococcus marinus subsp. pastoris (strain CCMP1986 / NIES-2087 / MED4).